The following is a 104-amino-acid chain: Large ribosomal subunit protein uL24 (104 aa).

This sequence belongs to the universal ribosomal protein uL24 family. As to quaternary structure, part of the 50S ribosomal subunit.

Its function is as follows. One of two assembly initiator proteins, it binds directly to the 5'-end of the 23S rRNA, where it nucleates assembly of the 50S subunit. In terms of biological role, one of the proteins that surrounds the polypeptide exit tunnel on the outside of the subunit. This is Large ribosomal subunit protein uL24 from Baumannia cicadellinicola subsp. Homalodisca coagulata.